A 209-amino-acid chain; its full sequence is Chaperone protein TorD (209 aa).

This sequence belongs to the TorD/DmsD family. TorD subfamily.

Its subcellular location is the cytoplasm. In terms of biological role, involved in the biogenesis of TorA. Acts on TorA before the insertion of the molybdenum cofactor and, as a result, probably favors a conformation of the apoenzyme that is competent for acquiring the cofactor. This is Chaperone protein TorD from Shewanella baltica (strain OS155 / ATCC BAA-1091).